The sequence spans 319 residues: Methionyl-tRNA formyltransferase (319 aa).

113-116 (SLLP) contributes to the (6S)-5,6,7,8-tetrahydrofolate binding site.

It belongs to the Fmt family.

The catalysed reaction is L-methionyl-tRNA(fMet) + (6R)-10-formyltetrahydrofolate = N-formyl-L-methionyl-tRNA(fMet) + (6S)-5,6,7,8-tetrahydrofolate + H(+). In terms of biological role, attaches a formyl group to the free amino group of methionyl-tRNA(fMet). The formyl group appears to play a dual role in the initiator identity of N-formylmethionyl-tRNA by promoting its recognition by IF2 and preventing the misappropriation of this tRNA by the elongation apparatus. The polypeptide is Methionyl-tRNA formyltransferase (Pseudomonas fluorescens (strain ATCC BAA-477 / NRRL B-23932 / Pf-5)).